The primary structure comprises 511 residues: 2'-acyl-2-O-sulfo-trehalose (hydroxy)phthioceranyltransferase PapA1 (511 aa).

Belongs to the PapA acyltransferase family.

It carries out the reaction a (hydroxy)phthioceranyl-[(hydroxy)phthioceranic acid synthase] + 2'-palmitoyl/stearoyl-2-O-sulfo-alpha,alpha-trehalose = a 3'-(hydroxy)phthioceranyl-2'-palmitoyl/stearoyl-2-O-sulfo-alpha,alpha-trehalose + holo-[(hydroxy)phthioceranic acid synthase].. In terms of biological role, catalyzes the acylation of trehalose-2-sulfate-2'-palmitate (SL659) by adding the (hydroxy)phthioceranoyl group at the 3'-position to yield the diacylated intermediate 2-palmitoyl-3-(C43)-phthioceranyl-alpha, alpha'-D-trehalose-2'-sulfate (SL1278). The chain is 2'-acyl-2-O-sulfo-trehalose (hydroxy)phthioceranyltransferase PapA1 (papA1) from Mycobacterium bovis (strain BCG / Pasteur 1173P2).